The chain runs to 876 residues: DNA topoisomerase 1 (876 aa).

Positions 3 to 150 constitute a Toprim domain; it reads KSLVIVESPA…RYKRVVFNEI (148 aa). E9 lines the Mg(2+) pocket. Residues 37-69 form a disordered region; that stretch reads LPTAGQTATPTGKAAAASTKKASTTDKEQQKRE. Residues 38-58 are compositionally biased toward low complexity; the sequence is PTAGQTATPTGKAAAASTKKA. The span at 59–69 shows a compositional bias: basic and acidic residues; the sequence is STTDKEQQKRE. D119 serves as a coordination point for Mg(2+). A Topo IA-type catalytic domain is found at 166–582; it reads NMDGVNAQQA…EFFADFSRDL (417 aa). The interval 200-205 is interaction with DNA; that stretch reads SAGRVQ. Y327 functions as the O-(5'-phospho-DNA)-tyrosine intermediate in the catalytic mechanism. 2 C4-type zinc fingers span residues 668 to 695 and 717 to 742; these read CPIC…NPNC and CDKC…NDAC.

The protein belongs to the type IA topoisomerase family. In terms of assembly, monomer. Mg(2+) is required as a cofactor.

It carries out the reaction ATP-independent breakage of single-stranded DNA, followed by passage and rejoining.. Functionally, releases the supercoiling and torsional tension of DNA, which is introduced during the DNA replication and transcription, by transiently cleaving and rejoining one strand of the DNA duplex. Introduces a single-strand break via transesterification at a target site in duplex DNA. The scissile phosphodiester is attacked by the catalytic tyrosine of the enzyme, resulting in the formation of a DNA-(5'-phosphotyrosyl)-enzyme intermediate and the expulsion of a 3'-OH DNA strand. The free DNA strand then undergoes passage around the unbroken strand, thus removing DNA supercoils. Finally, in the religation step, the DNA 3'-OH attacks the covalent intermediate to expel the active-site tyrosine and restore the DNA phosphodiester backbone. The chain is DNA topoisomerase 1 from Vibrio cholerae serotype O1 (strain ATCC 39315 / El Tor Inaba N16961).